Here is an 849-residue protein sequence, read N- to C-terminus: DNA mismatch repair protein MutS (849 aa).

665 to 672 contributes to the ATP binding site; sequence GPNMAGKS.

Belongs to the DNA mismatch repair MutS family.

Functionally, this protein is involved in the repair of mismatches in DNA. It is possible that it carries out the mismatch recognition step. This protein has a weak ATPase activity. This Wolbachia pipientis wMel protein is DNA mismatch repair protein MutS.